The primary structure comprises 104 residues: Probable RNA-binding protein PA4753 (104 aa).

The region spanning 1 to 97 (MALTQEQKKQ…NPKPNKNLSN (97 aa)) is the CRM domain.

This Pseudomonas aeruginosa (strain ATCC 15692 / DSM 22644 / CIP 104116 / JCM 14847 / LMG 12228 / 1C / PRS 101 / PAO1) protein is Probable RNA-binding protein PA4753.